Reading from the N-terminus, the 583-residue chain is Pescadillo (583 aa).

Positions 275–329 (EKLSALSASLARMVASVEEEEAELDHFPTEGEDQEKMEVREKMEQQQSKQKKLFE) form a coiled coil. The BRCT domain maps to 323 to 416 (KQKKLFEGLK…IQLPVEEYFL (94 aa)). Disordered stretches follow at residues 448 to 526 (RGEK…EEKA) and 558 to 583 (ANKL…KKKC). Residues 455 to 489 (EEDEEEEGEEEEDDEEDEEDDEQSEDEEEAEEEAN) show a composition bias toward acidic residues. Residues 512–526 (AKAENRARAAEEEKA) are compositionally biased toward basic and acidic residues.

This sequence belongs to the pescadillo family. As to quaternary structure, component of the PeBoW complex, composed of bop1, pes1 and wdr12. The complex is held together by bop1, which interacts with pes1 via its N-terminal domain and with wdr12 via a high-affinity interaction between the seven-bladed beta-propeller domains of the 2 proteins. The PeBoW complex associates with the 66S pre-ribosome.

It localises to the nucleus. Its subcellular location is the nucleolus. It is found in the nucleoplasm. Its function is as follows. Component of the PeBoW complex, which is required for maturation of 28S and 5.8S ribosomal RNAs and formation of the 60S ribosome. The chain is Pescadillo (pes) from Danio rerio (Zebrafish).